We begin with the raw amino-acid sequence, 247 residues long: Coproheme decarboxylase (247 aa).

Residues Arg129, 143 to 147 (YPMDK), His170, Gln183, and Ser221 each bind Fe-coproporphyrin III. Tyr143 is a catalytic residue.

The protein belongs to the ChdC family. Type 1 subfamily. Fe-coproporphyrin III serves as cofactor.

The catalysed reaction is Fe-coproporphyrin III + 2 H2O2 + 2 H(+) = heme b + 2 CO2 + 4 H2O. The enzyme catalyses Fe-coproporphyrin III + H2O2 + H(+) = harderoheme III + CO2 + 2 H2O. It carries out the reaction harderoheme III + H2O2 + H(+) = heme b + CO2 + 2 H2O. Its pathway is porphyrin-containing compound metabolism; protoheme biosynthesis. In terms of biological role, involved in coproporphyrin-dependent heme b biosynthesis. Catalyzes the decarboxylation of Fe-coproporphyrin III (coproheme) to heme b (protoheme IX), the last step of the pathway. The reaction occurs in a stepwise manner with a three-propionate intermediate. The chain is Coproheme decarboxylase from Bacillus anthracis.